Here is a 191-residue protein sequence, read N- to C-terminus: Hypoxanthine/guanine phosphoribosyltransferase (191 aa).

Belongs to the purine/pyrimidine phosphoribosyltransferase family. Archaeal HPRT subfamily. In terms of assembly, homodimer.

It localises to the cytoplasm. It catalyses the reaction IMP + diphosphate = hypoxanthine + 5-phospho-alpha-D-ribose 1-diphosphate. The catalysed reaction is GMP + diphosphate = guanine + 5-phospho-alpha-D-ribose 1-diphosphate. Its pathway is purine metabolism; IMP biosynthesis via salvage pathway; IMP from hypoxanthine: step 1/1. In terms of biological role, catalyzes a salvage reaction resulting in the formation of IMP that is energically less costly than de novo synthesis. The protein is Hypoxanthine/guanine phosphoribosyltransferase of Methanocella paludicola (strain DSM 17711 / JCM 13418 / NBRC 101707 / SANAE).